The sequence spans 446 residues: Putative ankyrin repeat protein L273 (446 aa).

6 ANK repeats span residues 71–100, 124–153, 206–237, 245–277, 303–332, and 365–394; these read NGEF…KSNM, DHNK…RMRP, TDIE…KILM, VWVS…KMHV, ELEY…NSYY, and YTDI…QQII.

The polypeptide is Putative ankyrin repeat protein L273 (Acanthamoeba polyphaga (Amoeba)).